A 1104-amino-acid chain; its full sequence is MSEAVEKIRSHDKYRQFYELATKIRNQKLLADAESASLHRHKQEVADLEVKLLTEAWRSSYWTNVSRQLKSQSLDPSYACRLLKEISDTEALAAYKHFGHHYSTLNQLLTVLYMEPTSVAELLNMWDQNDVTTNDNLIQTFFHLVYSCGLYPDDELKIAQVVCYLLKLQLVKSGSQMRTMLRKETSISTRFYKYFVEQMHPTMVYLTKALRKSVLNVIQLGNFWLDVDMKQSSSRFLSDGRQNSERLPEYRALVVSKLVDFVDNFLENISLALSMLPPNLNWIVRDIFCSLYEIVDDMSAIELSHACKDMIVSNLLCPAIISPQKFGVVDNDVRIGSIVNHNLAQIAMIIQMISLREFESPPEEYREFLSQCRNTHLISEMMDSLLVENMAPDVEITSLIASGKSESDLETKSNFVGSLADANKLIKMIRETPPTTDLKISRIVSVCQKMPESFASTVEKLHVENSEDSPKLSALRNIHRKVQKSFKRTGDSFYDPNELHMKTENYGGVFEKENFDRKLREASEVERRKQEARKQKQLKETELLIMDNISSDSAPITIKASAATNAPIANNNFTENKDLIDFSTLYTTTDDVISIPSEPSKEEKSVEKPNVNNVSVDAPVEALQIGESRGGLAKLKNFSDRMKKGITQSNTLSDIRDHLRRSSSLAKQPSGMVSSASAQNIPDTEKGDSILAKYASNSSIKIEKSTFTKLTDTKSMPKNTEMSEPYYSPENLTSCRAFKDTLRKMITVLGNVSYLPKIGCRSEMKEMSKKVRLDSFLDGVLVETEHRREYGQAAQLREVKRCIELFENEGVEILMDHLVGNEVEQDFLVRQMREERAILMRKSNDISSMEQRVLLNRRLTEQILVDNLIQTFLETGFQNSKLASGKTPEVVAVGKFYSEFKFLQAHDERAEFLQNLLTYLRERLMQNYDWNFATESMIARAMTTMERFVMFAVYEIAFWPNREMDQKKDKLLQSVIGKASSSVTPVHEALKIPEHLLGEAPWPSAQAELSMLDNYVTAQEKLNCLVRCCDVINNLVALSSKNAVASADDLTPVLVFVIIKANPRSLLSNLQFIETFAGDQIESGRDAYYWVNFKSAVEYIKTIL.

The Ras-GAP domain occupies 156–389 (LKIAQVVCYL…EMMDSLLVEN (234 aa)). The tract at residues 663 to 682 (SSLAKQPSGMVSSASAQNIP) is disordered. Residues 966–1104 (QKKDKLLQSV…SAVEYIKTIL (139 aa)) form the VPS9 domain.

It belongs to the GAPVD1 family. As to quaternary structure, interacts with GDP-bound rab-5. Interacts with alpha-adaptin.

It is found in the membrane. The protein localises to the cytoplasmic vesicle. Its subcellular location is the clathrin-coated vesicle. Its function is as follows. Acts both as a GTPase-activating protein (GAP) and a guanine nucleotide exchange factor (GEF), and participates in endocytosis. Acts by regulating the activation of rab-5 by exchanging bound GDP for free GTP at clathrin coated pits. This chain is Receptor-mediated endocytosis protein 6 (rme-6), found in Caenorhabditis briggsae.